A 1661-amino-acid chain; its full sequence is Microtubule cross-linking factor 2 (1661 aa).

A disordered region spans residues 1–187; the sequence is MEAPAAEPPV…EPSVAASSVG (187 aa). Low complexity-rich tracts occupy residues 76 to 94 and 133 to 149; these read AVAP…VRTG and LLGL…SAAG. A compositionally biased stretch (pro residues) spans 167–176; the sequence is QQPPRPPASP. Residues 211-240 form a required for association with Golgi apparatus membrane region; sequence PSGLVRELEELRSENDYLKDEIEELRAEML. Coiled coils occupy residues 218-281 and 310-351; these read LEEL…AERR and SMRL…LQTE. A disordered region spans residues 353–373; sequence ERPREHSLKKRGTRSLGKADK. 3 coiled-coil regions span residues 450–484, 820–865, and 1083–1117; these read LKLV…MKDH, IKEL…LKED, and SQEK…LQKA. Phosphoserine is present on S1169. The disordered stretch occupies residues 1196–1221; that stretch reads AFGFVSSEPGDPEKDTKEKPGLSSRD. The segment covering 1206–1215 has biased composition (basic and acidic residues); the sequence is DPEKDTKEKP. S1255 bears the Phosphoserine mark. Disordered regions lie at residues 1432 to 1456, 1538 to 1563, and 1636 to 1661; these read RPCC…DSSK, RAPS…ASYH, and HSPS…PPSE. The span at 1652–1661 shows a compositional bias: basic and acidic residues; sequence GEERALPPSE.

The protein belongs to the MTCL family. As to quaternary structure, interacts with CLASP1 and CLASP2. The C-terminal 25 kDa form occurs as a monomer. Post-translationally, proteolytically cleaved in primary hepatocytes into a C-terminal 80 kDa form. Proteolytically cleaved into a C-terminal SOGA 25 kDa form that is detected in plasma. In terms of processing, phosphorylated during mitosis in a CDK1-dependent manner.

Its subcellular location is the cytoplasm. The protein resides in the cytoskeleton. It localises to the golgi apparatus membrane. The protein localises to the midbody. It is found in the secreted. Microtubule-associated factor that enables integration of the centrosomal and Golgi-associated microtubules on the Golgi membrane, supporting directional migration. Preferentially acts on the perinuclear microtubules accumulated around the Golgi. Associates with the Golgi membrane through the N-terminal coiled-coil region and directly binds microtubules through the C-terminal domain. Required for faithful chromosome segregation during mitosis. Regulates autophagy by playing a role in the reduction of glucose production in an adiponectin- and insulin-dependent manner. The protein is Microtubule cross-linking factor 2 of Homo sapiens (Human).